Reading from the N-terminus, the 133-residue chain is Small ribosomal subunit protein uS19 (133 aa).

This sequence belongs to the universal ribosomal protein uS19 family.

Protein S19 forms a complex with S13 that binds strongly to the 16S ribosomal RNA. This Archaeoglobus fulgidus (strain ATCC 49558 / DSM 4304 / JCM 9628 / NBRC 100126 / VC-16) protein is Small ribosomal subunit protein uS19 (rps19).